The chain runs to 511 residues: ATP synthase subunit alpha 1 (511 aa).

170 to 177 contacts ATP; the sequence is GDRQTGKT.

The protein belongs to the ATPase alpha/beta chains family. F-type ATPases have 2 components, CF(1) - the catalytic core - and CF(0) - the membrane proton channel. CF(1) has five subunits: alpha(3), beta(3), gamma(1), delta(1), epsilon(1). CF(0) has three main subunits: a(1), b(2) and c(9-12). The alpha and beta chains form an alternating ring which encloses part of the gamma chain. CF(1) is attached to CF(0) by a central stalk formed by the gamma and epsilon chains, while a peripheral stalk is formed by the delta and b chains.

It localises to the cell inner membrane. The catalysed reaction is ATP + H2O + 4 H(+)(in) = ADP + phosphate + 5 H(+)(out). Produces ATP from ADP in the presence of a proton gradient across the membrane. The alpha chain is a regulatory subunit. This is ATP synthase subunit alpha 1 from Gluconobacter oxydans (strain 621H) (Gluconobacter suboxydans).